A 477-amino-acid chain; its full sequence is MSPQTETKTSVGFKAGVKDYKLTYYTPDYKTKDTDILAAFRVTPQPGVPPEEAGXXVAAESSTGTWTTVWTDGLTSLDRYKGRCYGIEPVPGEETQFIAYVAYPLDLFEEXXVTNMFTSIVGNVFGFKALRALRLEDLRIPTAYVKTFQGPXHGIQVERDKLNKYGRPLLGCTIKPKLGLSAKNYGRAVYECLRGGLDFTKDDENVNSQPFMRWRDRFIFCAEAIYKAQAETGEIKGHYLNATAGTCEDMMKRAVFARELGVPIVMHDYLTGGFTANTTLAHYCRDNGLLLHIHRAMHAVIDRQKNHGMHFRVLAKALRMSGGDHIHSGTVVGKLEGEREITLGFVDLLRDDFIEKDRSRGIYFTQDWVSLPGVLPVASGGIHVWHMPALTEIFGDDSVLQFGGGTLGHPWGNAPGAVANRVALEACVQARNEGRDLATEGNEIIREATKWSPELAAACEVWKEIKFEFEAMDTLDV.

The propeptide occupies 1–2; sequence MS. P3 is subject to N-acetylproline. N6,N6,N6-trimethyllysine is present on K14. Substrate contacts are provided by N123 and T173. K175 functions as the Proton acceptor in the catalytic mechanism. Position 177 (K177) interacts with substrate. Residues K201, D203, and E204 each contribute to the Mg(2+) site. K201 carries the post-translational modification N6-carboxylysine. The Proton acceptor role is filled by H294. Residues R295, H327, and S379 each contribute to the substrate site.

Belongs to the RuBisCO large chain family. Type I subfamily. As to quaternary structure, heterohexadecamer of 8 large chains and 8 small chains; disulfide-linked. The disulfide link is formed within the large subunit homodimers. Mg(2+) serves as cofactor. In terms of processing, the disulfide bond which can form in the large chain dimeric partners within the hexadecamer appears to be associated with oxidative stress and protein turnover.

Its subcellular location is the plastid. It is found in the chloroplast. The catalysed reaction is 2 (2R)-3-phosphoglycerate + 2 H(+) = D-ribulose 1,5-bisphosphate + CO2 + H2O. The enzyme catalyses D-ribulose 1,5-bisphosphate + O2 = 2-phosphoglycolate + (2R)-3-phosphoglycerate + 2 H(+). RuBisCO catalyzes two reactions: the carboxylation of D-ribulose 1,5-bisphosphate, the primary event in carbon dioxide fixation, as well as the oxidative fragmentation of the pentose substrate in the photorespiration process. Both reactions occur simultaneously and in competition at the same active site. This chain is Ribulose bisphosphate carboxylase large chain, found in Carthamus tinctorius (Safflower).